We begin with the raw amino-acid sequence, 148 residues long: Protein ADM2 (148 aa).

The first 24 residues, 1–24 (MARIPTAALGCISLLCLQLPGSLS), serve as a signal peptide directing secretion. Residues 25–98 (RSLGGDPRPV…HSGPRRHSGP (74 aa)) constitute a propeptide that is removed on maturation. Disordered stretches follow at residues 26 to 57 (SLGG…APRP) and 70 to 101 (RGAG…PRRT). A disulfide bridge connects residues C110 and C115. Position 147 is a tyrosine amide (Y147).

The protein belongs to the adrenomedullin family. Expressed in the esophagus, stomach, jejunum, ileum, ileocecum, ascending colon, transverse colon, descending colon and rectum. Expressed in myocardial cells of the heart, renal tubular cells, hypothalamus, and pituitary.

The protein localises to the secreted. In terms of biological role, intermedin/ADM2 is a peptide hormone that plays a role as physiological regulator of gastrointestinal and cardiovascular bioactivities mediated by the CALCRL-RAMPs receptor complexes. Activates the cAMP-dependent pathway through interaction with CALCRL-RAMP3 receptor complex. In Homo sapiens (Human), this protein is Protein ADM2.